Consider the following 152-residue polypeptide: uncharacterized protein (152 aa).

3 helical membrane-spanning segments follow: residues leucine 13–phenylalanine 33, leucine 38–methionine 58, and tryptophan 69–isoleucine 89.

The protein localises to the cell membrane. This is an uncharacterized protein from Mycoplasma pneumoniae (strain ATCC 29342 / M129 / Subtype 1) (Mycoplasmoides pneumoniae).